Reading from the N-terminus, the 371-residue chain is Deoxyguanosinetriphosphate triphosphohydrolase-like protein (371 aa).

The HD domain maps to arginine 62–asparagine 200.

It belongs to the dGTPase family. Type 2 subfamily.

The sequence is that of Deoxyguanosinetriphosphate triphosphohydrolase-like protein from Pelagibacter ubique (strain HTCC1062).